We begin with the raw amino-acid sequence, 252 residues long: Ubiquinone biosynthesis O-methyltransferase (252 aa).

Residues R36, G60, D81, and L123 each coordinate S-adenosyl-L-methionine.

It belongs to the methyltransferase superfamily. UbiG/COQ3 family.

The catalysed reaction is a 3-demethylubiquinol + S-adenosyl-L-methionine = a ubiquinol + S-adenosyl-L-homocysteine + H(+). It carries out the reaction a 3-(all-trans-polyprenyl)benzene-1,2-diol + S-adenosyl-L-methionine = a 2-methoxy-6-(all-trans-polyprenyl)phenol + S-adenosyl-L-homocysteine + H(+). Its pathway is cofactor biosynthesis; ubiquinone biosynthesis. Its function is as follows. O-methyltransferase that catalyzes the 2 O-methylation steps in the ubiquinone biosynthetic pathway. This Rickettsia prowazekii (strain Madrid E) protein is Ubiquinone biosynthesis O-methyltransferase.